The sequence spans 457 residues: Acetylcholine receptor subunit alpha (457 aa).

The N-terminal stretch at 1–20 is a signal peptide; sequence MELTAVLLLLGLCSAGTVLG. Residues 21–230 lie on the Extracellular side of the membrane; the sequence is SEHETRLVAK…ITYHFVMQRL (210 aa). 2 cysteine pairs are disulfide-bonded: C148–C162 and C212–C213. N-linked (GlcNAc...) asparagine glycosylation occurs at N161. 3 helical membrane passes run 231 to 255, 263 to 281, and 297 to 316; these read PLYFIVNVIIPCLLFSFLTSLVFYL, MTLSISVLLSLTVFLLVIV, and YMLFTMVFVIASIIITVIVI. Residues 317-428 lie on the Cytoplasmic side of the membrane; the sequence is NTHHRSPSTH…WKYVAMVMDH (112 aa). The chain crosses the membrane as a helical span at residues 429–447; that stretch reads ILLGVFMLVCLIGTLAVFA.

Belongs to the ligand-gated ion channel (TC 1.A.9) family. Acetylcholine receptor (TC 1.A.9.1) subfamily. Alpha-1/CHRNA1 sub-subfamily. As to quaternary structure, one of the alpha chains that assemble within the acetylcholine receptor, a pentamer of two alpha chains, a beta, a delta, and a gamma (in immature muscle) or epsilon (in mature muscle) chains. The muscle heteropentamer composed of alpha-1, beta-1, delta, epsilon subunits interacts with the alpha-conotoxin ImII.

It is found in the postsynaptic cell membrane. It localises to the cell membrane. The catalysed reaction is K(+)(in) = K(+)(out). The enzyme catalyses Na(+)(in) = Na(+)(out). Functionally, upon acetylcholine binding, the AChR responds by an extensive change in conformation that affects all subunits and leads to opening of an ion-conducting channel across the plasma membrane. The sequence is that of Acetylcholine receptor subunit alpha (Chrna1) from Rattus norvegicus (Rat).